A 195-amino-acid chain; its full sequence is MSIPTVIAFSGNIGAGKSTLLRGLEAAGYEVVPEDFSRWGQLFEMALEDPNRWKFSSQLKIMLIQSEIQRAAKKSDNRVVVLERTTECVLDFCNVAMEQGQILPAEHDMLVQIWEKVNVPVDAKIFLNTPPEKCMERIAFRGRAFERDIPVEYLSSLHSKFTRDPDYIMSGLESKEVVLANAIELIEKIVSRNVR.

The chain is Putative deoxynucleoside kinase from Frog virus 3 (isolate Goorha) (FV-3).